The primary structure comprises 687 residues: Complement C1s subcomponent (687 aa).

Residues 1-15 form the signal peptide; that stretch reads MWCIVLLSLLAWVDA. In terms of domain architecture, CUB 1 spans 16–130; the sequence is EPTMYGEILS…TGFAAYYVAV (115 aa). Ca(2+) is bound by residues glutamate 60, aspartate 68, aspartate 113, aspartate 131, valine 132, and glutamate 134. A disulfide bridge links cysteine 65 with cysteine 83. The 42-residue stretch at 131-172 folds into the EGF-like; calcium-binding domain; the sequence is DVNECTDFADSPCSHFCNNYIGGYFCSCPPEYFLHEDKKNCG. Intrachain disulfides connect cysteine 135–cysteine 147, cysteine 143–cysteine 156, and cysteine 158–cysteine 171. Ca(2+) contacts are provided by asparagine 149, tyrosine 150, and glycine 153. The residue at position 149 (asparagine 149) is a (3R)-3-hydroxyasparagine. N-linked (GlcNAc...) asparagine glycosylation is present at asparagine 174. Intrachain disulfides connect cysteine 175–cysteine 202, cysteine 234–cysteine 251, cysteine 294–cysteine 341, cysteine 321–cysteine 354, cysteine 359–cysteine 403, cysteine 386–cysteine 421, cysteine 425–cysteine 548, cysteine 594–cysteine 617, and cysteine 626–cysteine 658. The 116-residue stretch at 175–290 folds into the CUB 2 domain; that stretch reads CSGDVFTTLI…KGWKFRYHGD (116 aa). Sushi domains lie at 292–356 and 357–423; these read IPCP…RCQP and VDCG…KCVP. The N-linked (GlcNAc...) asparagine glycan is linked to asparagine 406. In terms of domain architecture, Peptidase S1 spans 438 to 679; sequence IFGGIITKIE…YIDWIRETMQ (242 aa). Residues histidine 475 and aspartate 528 each act as charge relay system in the active site. The Charge relay system role is filled by serine 630.

The protein belongs to the peptidase S1 family. As to quaternary structure, C1 is a calcium-dependent trimolecular complex of C1q, C1r and C1s in the molar ration of 1:2:2. Activated C1s is an disulfide-linked heterodimer of a heavy chain and a light chain. The iron and 2-oxoglutarate dependent 3-hydroxylation of aspartate and asparagine is (R) stereospecific within EGF domains.

The enzyme catalyses Cleavage of Arg-|-Ala bond in complement component C4 to form C4a and C4b, and Lys(or Arg)-|-Lys bond in complement component C2 to form C2a and C2b: the 'classical' pathway C3 convertase.. Its activity is regulated as follows. Inhibited by SERPING1. C1s B chain is a serine protease that combines with C1q and C1r to form C1, the first component of the classical pathway of the complement system. C1r activates C1s so that it can, in turn, activate C2 and C4. Also cleaves IGFBP5 and thereby inhibits the trophic effects of IGF1. This Sus scrofa (Pig) protein is Complement C1s subcomponent.